A 155-amino-acid chain; its full sequence is UPF0178 protein Gmet_1725 (155 aa).

The protein belongs to the UPF0178 family.

In Geobacter metallireducens (strain ATCC 53774 / DSM 7210 / GS-15), this protein is UPF0178 protein Gmet_1725.